A 101-amino-acid chain; its full sequence is Small ribosomal subunit protein uS14 (101 aa).

The span at methionine 1–asparagine 10 shows a compositional bias: basic and acidic residues. Residues methionine 1 to lysine 23 form a disordered region. Residues asparagine 11–lysine 23 show a composition bias toward basic residues.

This sequence belongs to the universal ribosomal protein uS14 family. As to quaternary structure, part of the 30S ribosomal subunit. Contacts proteins S3 and S10.

Its function is as follows. Binds 16S rRNA, required for the assembly of 30S particles and may also be responsible for determining the conformation of the 16S rRNA at the A site. This is Small ribosomal subunit protein uS14 from Rhodopseudomonas palustris (strain HaA2).